The primary structure comprises 246 residues: Eukaryotic translation initiation factor 3 subunit K (246 aa).

A compositionally biased stretch (low complexity) spans 1 to 21; the sequence is MENDQDQQQQQQQSQQQQPQQ. Residues 1-30 are disordered; that stretch reads MENDQDQQQQQQQSQQQQPQQEEQEQVDVD. In terms of domain architecture, PCI spans 72–235; the sequence is YLFQANSTLL…QKKADTFTFD (164 aa).

Belongs to the eIF-3 subunit K family. As to quaternary structure, component of the eukaryotic translation initiation factor 3 (eIF-3) complex.

It is found in the cytoplasm. Functionally, component of the eukaryotic translation initiation factor 3 (eIF-3) complex, which is involved in protein synthesis of a specialized repertoire of mRNAs and, together with other initiation factors, stimulates binding of mRNA and methionyl-tRNAi to the 40S ribosome. The eIF-3 complex specifically targets and initiates translation of a subset of mRNAs involved in cell proliferation. This is Eukaryotic translation initiation factor 3 subunit K (eif3K) from Dictyostelium discoideum (Social amoeba).